The following is a 126-amino-acid chain: MKEVIFTENAPKPIGPYSQAIKAGNFLFIAGQIPIDPKTGEIVKGDIKDQTRQVLENIKAILEAAGYSLNDVIKVTVYLKDMNDFAKMNEVYAEYFGESKPARVAVEVSRLPKDVLIEIEAIAYKE.

The protein belongs to the RutC family.

In Pyrococcus horikoshii (strain ATCC 700860 / DSM 12428 / JCM 9974 / NBRC 100139 / OT-3), this protein is RutC family protein PH0854.